The chain runs to 198 residues: Probable GTP-binding protein EngB (198 aa).

In terms of domain architecture, EngB-type G spans 21–195 (NFSEVAFLGR…EDIIINQTLG (175 aa)). GTP-binding positions include 29-36 (GRSNVGKS), 56-60 (GKTQL), 81-84 (DLPG), 151-154 (TKCD), and 174-176 (VSN). Mg(2+)-binding residues include serine 36 and threonine 58.

It belongs to the TRAFAC class TrmE-Era-EngA-EngB-Septin-like GTPase superfamily. EngB GTPase family. Mg(2+) serves as cofactor.

Functionally, necessary for normal cell division and for the maintenance of normal septation. The chain is Probable GTP-binding protein EngB from Campylobacter jejuni subsp. jejuni serotype O:23/36 (strain 81-176).